Consider the following 117-residue polypeptide: Ribonuclease P protein component (117 aa).

It belongs to the RnpA family. In terms of assembly, consists of a catalytic RNA component (M1 or rnpB) and a protein subunit.

It carries out the reaction Endonucleolytic cleavage of RNA, removing 5'-extranucleotides from tRNA precursor.. Its function is as follows. RNaseP catalyzes the removal of the 5'-leader sequence from pre-tRNA to produce the mature 5'-terminus. It can also cleave other RNA substrates such as 4.5S RNA. The protein component plays an auxiliary but essential role in vivo by binding to the 5'-leader sequence and broadening the substrate specificity of the ribozyme. This is Ribonuclease P protein component from Lactococcus lactis subsp. lactis (strain IL1403) (Streptococcus lactis).